Reading from the N-terminus, the 283-residue chain is Nickel/cobalt efflux system RcnA (283 aa).

Residues 1 to 5 are Periplasmic-facing; that stretch reads MGEFS. The helical transmembrane segment at 6 to 26 threads the bilayer; that stretch reads ILLQQGNGWFFIPSAILLGIL. The Cytoplasmic portion of the chain corresponds to 27-51; it reads HGLEPGHSKTMMAAFIIAIKGTIKQ. The chain crosses the membrane as a helical span at residues 52–72; the sequence is AFMLGLAATLSHTAVVWLIAL. Residues 73 to 85 lie on the Periplasmic side of the membrane; it reads GGMYLSRAYAAES. Residues 86–106 traverse the membrane as a helical segment; sequence VEPWLQLISAIIILGTACWMF. At 107–183 the chain is on the cytoplasmic side; the sequence is WRTWRGEQQW…FHGQKVTNEQ (77 aa). The segment covering 120-148 has biased composition (basic and acidic residues); that stretch reads SHHDHDHDHDHDHDHDHDHDHDHDHHGHT. The disordered stretch occupies residues 120-149; the sequence is SHHDHDHDHDHDHDHDHDHDHDHDHHGHTY. The helical transmembrane segment at 184–204 threads the bilayer; it reads ILLFGLTGGLIPCPAAITLLL. Residues 205–218 lie on the Periplasmic side of the membrane; the sequence is ICIQLQALTLGATM. The chain crosses the membrane as a helical span at residues 219 to 239; sequence VLCFSLGLALTLVAVGVGAAI. Residues 240 to 260 are Cytoplasmic-facing; that stretch reads SVQQAVKRWNGFTTLARRAPY. A helical transmembrane segment spans residues 261-281; it reads FSSILIGLVGLYMGIHGYTGI. At 282–283 the chain is on the periplasmic side; the sequence is MQ.

The protein belongs to the NiCoT transporter (TC 2.A.52) family. RcnA subfamily.

Its subcellular location is the cell inner membrane. In terms of biological role, efflux system for nickel and cobalt. The polypeptide is Nickel/cobalt efflux system RcnA (rcnA) (Salmonella arizonae (strain ATCC BAA-731 / CDC346-86 / RSK2980)).